Reading from the N-terminus, the 279-residue chain is Lipid phosphate phosphatase epsilon 1, chloroplastic (279 aa).

The transit peptide at 1–88 (MAASSSLLLL…SFINNSSEIR (88 aa)) directs the protein to the chloroplast. The next 5 helical transmembrane spans lie at 126 to 142 (LWAVIGSISNSALSVVL), 164 to 184 (SHAQSISFISVFAVLSVMEWL), 185 to 205 (GTNGVSLFLSGLILALGSYFI), 219 to 239 (VVVGAIVGSLFCILWYTMWNS), and 255 to 275 (VFLFAATFALAFAAYVVLNWF).

This sequence belongs to the PA-phosphatase related phosphoesterase family. Expressed in root tips, root branch points, cotyledons and leaves.

It localises to the plastid. It is found in the chloroplast inner membrane. With respect to regulation, inhibited by Mg(2+). Exhibits phosphatidate phosphatase (PAP) activity in vitro. May play a secondary role as PAP in plastids. In Arabidopsis thaliana (Mouse-ear cress), this protein is Lipid phosphate phosphatase epsilon 1, chloroplastic (LPPE1).